We begin with the raw amino-acid sequence, 873 residues long: Zinc fingers and homeoboxes protein 1 (873 aa).

Residues 24-63 form a disordered region; it reads LISDLDEGPPVLTPVENTRAESISSDEEVHESVDSDNQQN. Position 36 is a phosphothreonine (Thr36). Residues Ser45, Ser47, and Ser48 each carry the phosphoserine modification. C2H2-type zinc fingers lie at residues 70–93 and 102–125; these read YECKYCTFQTPDLNMFTFHVDSEH and YVCVECNFLTKRYDALSEHNLKYH. Residue Lys159 forms a Glycyl lysine isopeptide (Lys-Gly) (interchain with G-Cter in SUMO2) linkage. Residues 200–236 form a disordered region; the sequence is HNSVEDVPEEKENEIKPDREEIVENPSSSASESNTST. Phosphoserine is present on Ser202. Basic and acidic residues predominate over residues 212 to 221; that stretch reads NEIKPDREEI. The segment covering 223 to 236 has biased composition (low complexity); sequence ENPSSSASESNTST. The tract at residues 272-432 is required for dimerization; that stretch reads NSNLIPKVLI…QNNIQKSQVP (161 aa). Residues 272–564 form a required for interaction with NFYA region; the sequence is NSNLIPKVLI…AQPKQSWNPF (293 aa). Positions 284-346 form a DNA-binding region, homeobox 1; that stretch reads NSIPTYNAAL…LKHGVSWTPE (63 aa). Glycyl lysine isopeptide (Lys-Gly) (interchain with G-Cter in SUMO2) cross-links involve residues Lys441, Lys454, Lys485, and Lys629. 2 DNA-binding regions (homeobox) span residues 464–526 and 569–630; these read SFGI…KSNQ and PQKF…EEKM. 2 disordered regions span residues 626–667 and 732–769; these read KEEK…ICKK and SSMNGLSSLRKRGRGRPKGRGRGRPRGRPRGSKRINNW. A Phosphoserine modification is found at Ser648. The segment at residues 660 to 722 is a DNA-binding region (homeobox 4); the sequence is STGKICKKTP…YAWKNGNLKW (63 aa). The interval 734–768 is required for nuclear localization; it reads MNGLSSLRKRGRGRPKGRGRGRPRGRPRGSKRINN. Over residues 740 to 764 the composition is skewed to basic residues; the sequence is LRKRGRGRPKGRGRGRPRGRPRGSK. Ser774 is modified (phosphoserine). Residues 777–832 constitute a DNA-binding region (homeobox 5); the sequence is KFKTGTAILKDYYLKHKFLNEQDLDELVNKSHMGYEQVREWFAERQRRSELGIELF. The tract at residues 829–873 is disordered; the sequence is IELFEENEEEDEVIDDQEEDEEETDDSDTWEPPRHVKRKLSKSDD. The segment covering 831-857 has biased composition (acidic residues); sequence LFEENEEEDEVIDDQEEDEEETDDSDT. Residues 831–873 are required for repressor activity; that stretch reads LFEENEEEDEVIDDQEEDEEETDDSDTWEPPRHVKRKLSKSDD. The segment covering 863–873 has biased composition (basic residues); that stretch reads HVKRKLSKSDD.

It belongs to the ZHX family. As to quaternary structure, forms homodimers. Heterodimer (via HD1 domain) with ZHX2 (via HD1 domain). Also forms a heterodimer with ZHX3 which is a prerequisite for repressor activity. Interacts with ATF7IP and NFYA. Interacts (via homeobox domains) with DNMT3B (via PWWP domain).

The protein localises to the nucleus. Its function is as follows. Acts as a transcriptional repressor. Increases DNMT3B-mediated repressive transcriptional activity when DNMT3B is tethered to DNA. May link molecule between DNMT3B and other co-repressor proteins. The protein is Zinc fingers and homeoboxes protein 1 (ZHX1) of Pan troglodytes (Chimpanzee).